The chain runs to 510 residues: RNA-splicing ligase RtcB homolog (510 aa).

Mn(2+) contacts are provided by aspartate 124, cysteine 127, histidine 232, histidine 264, and histidine 358. 231-235 (NHYAE) contacts GMP. Residues 358-359 (HN), 407-410 (GGTM), serine 414, 433-436 (HGAG), and lysine 509 contribute to the GMP site. Histidine 433 (GMP-histidine intermediate) is an active-site residue.

The protein belongs to the RtcB family. As to quaternary structure, catalytic component of the tRNA-splicing ligase complex. Requires Mn(2+) as cofactor.

The catalysed reaction is a 3'-end 3'-phospho-ribonucleotide-RNA + a 5'-end dephospho-ribonucleoside-RNA + GTP = a ribonucleotidyl-ribonucleotide-RNA + GMP + diphosphate. The enzyme catalyses a 3'-end 2',3'-cyclophospho-ribonucleotide-RNA + a 5'-end dephospho-ribonucleoside-RNA + GTP + H2O = a ribonucleotidyl-ribonucleotide-RNA + GMP + diphosphate + H(+). Its function is as follows. Catalytic subunit of the tRNA-splicing ligase complex that acts by directly joining spliced tRNA halves to mature-sized tRNAs by incorporating the precursor-derived splice junction phosphate into the mature tRNA as a canonical 3',5'-phosphodiester. May act as an RNA ligase with broad substrate specificity, and may function toward other RNAs. The chain is RNA-splicing ligase RtcB homolog from Trichoplax adhaerens (Trichoplax reptans).